Consider the following 209-residue polypeptide: High-affinity nitrate transporter 3.2 (209 aa).

Positions 1-22 (MAIHTLLFVSLLIFSLIESSSG) are cleaved as a signal peptide. Residues 177 to 197 (LDIASTFFSVFSVVSLFVFFV) form a helical membrane-spanning segment.

Belongs to the NAR2 family. In terms of tissue distribution, bearly detected in roots and shoots.

The protein localises to the cell membrane. In terms of biological role, acts as a dual component transporter with NTR2.1. Required for high-affinity nitrate transport. The chain is High-affinity nitrate transporter 3.2 from Arabidopsis thaliana (Mouse-ear cress).